Consider the following 528-residue polypeptide: DNA damage-binding protein cmr1 (528 aa).

Disordered stretches follow at residues 32–98 (AQSS…QYEA) and 217–243 (DASQ…DPDP). Positions 52–62 (KPKKKPPPKKV) are enriched in basic residues. Residues 185 to 226 (LTPERIYTMTFHPSEAKPLIFAGDKMGNLGVLDASQEKPTSA) form a WD 1 repeat. Positions 230–242 (EDDEEDAEDDDPD) are enriched in acidic residues. WD repeat units lie at residues 250–290 (PHTR…SVEK), 297–337 (SDDI…RSAV), 342–382 (LSEK…HDDP), 389–428 (VSRL…AAWE), 451–494 (GRWV…LAQL), and 497–528 (DGIT…CLWM).

Belongs to the WD repeat DDB2/WDR76 family.

Functionally, DNA-binding protein that binds to both single- and double-stranded DNA. Binds preferentially to UV-damaged DNA. May be involved in DNA-metabolic processes. The protein is DNA damage-binding protein cmr1 of Aspergillus fumigatus (strain CBS 144.89 / FGSC A1163 / CEA10) (Neosartorya fumigata).